The sequence spans 550 residues: Major fimbrium tip subunit FimE (550 aa).

Positions 1–21 (MKSKSIIAQLLYVLIAFMAVS) are cleaved as a signal peptide. A lipid anchor (N-palmitoyl cysteine) is attached at C22. Residue C22 is the site of S-diacylglycerol cysteine attachment. Residues 22 to 51 (CVADKSEPCPSGEPTRVSGSIVSLEHHGLR) constitute a propeptide that is removed on maturation.

This sequence belongs to the FimE family. As to quaternary structure, fimbriae are composed of a major, structural subunit and the minor components FimC, FimD and FimE. Identified in a complex composed of FimC, FimD and FimE (in vitro). Does not directly interact with host proteins, but only as a complex with FimC and FimD.

Its subcellular location is the fimbrium. The protein localises to the cell outer membrane. Its function is as follows. Probably a component of the fimbrium tip; required for incorporation of FimC and FimD into fimbriae. These long, filamentous pili are attached to the cell surface; they mediate biofilm formation, adhesion onto host cells and onto other bacteria that are part of the oral microbiome. They play an important role in invasion of periodontal tissues and are major virulence factors. FimC, FimD and FimE contribute to interaction with host CXCR4 and thereby down-regulate the TLR2-mediated host immune response. The chain is Major fimbrium tip subunit FimE from Porphyromonas gingivalis (strain ATCC 33277 / DSM 20709 / CIP 103683 / JCM 12257 / NCTC 11834 / 2561).